The chain runs to 421 residues: Enolase (421 aa).

Residue Gln162 coordinates (2R)-2-phosphoglycerate. Glu204 acts as the Proton donor in catalysis. Asp241, Glu284, and Asp311 together coordinate Mg(2+). Lys336, Arg365, Ser366, and Lys387 together coordinate (2R)-2-phosphoglycerate. The active-site Proton acceptor is the Lys336.

The protein belongs to the enolase family. It depends on Mg(2+) as a cofactor.

It localises to the cytoplasm. The protein localises to the secreted. Its subcellular location is the cell surface. The catalysed reaction is (2R)-2-phosphoglycerate = phosphoenolpyruvate + H2O. It participates in carbohydrate degradation; glycolysis; pyruvate from D-glyceraldehyde 3-phosphate: step 4/5. In terms of biological role, catalyzes the reversible conversion of 2-phosphoglycerate (2-PG) into phosphoenolpyruvate (PEP). It is essential for the degradation of carbohydrates via glycolysis. The chain is Enolase from Nautilia profundicola (strain ATCC BAA-1463 / DSM 18972 / AmH).